The following is a 237-amino-acid chain: Purine nucleoside phosphorylase DeoD-type (237 aa).

Histidine 4 contacts a purine D-ribonucleoside. Residues glycine 20, arginine 24, arginine 43, and 87–90 (RVGT) contribute to the phosphate site. Residues 179 to 181 (EME) and 203 to 204 (SD) each bind a purine D-ribonucleoside. Residue aspartate 204 is the Proton donor of the active site.

It belongs to the PNP/UDP phosphorylase family. Homohexamer; trimer of homodimers.

It catalyses the reaction a purine D-ribonucleoside + phosphate = a purine nucleobase + alpha-D-ribose 1-phosphate. The enzyme catalyses a purine 2'-deoxy-D-ribonucleoside + phosphate = a purine nucleobase + 2-deoxy-alpha-D-ribose 1-phosphate. Catalyzes the reversible phosphorolytic breakdown of the N-glycosidic bond in the beta-(deoxy)ribonucleoside molecules, with the formation of the corresponding free purine bases and pentose-1-phosphate. The protein is Purine nucleoside phosphorylase DeoD-type of Streptococcus gordonii (strain Challis / ATCC 35105 / BCRC 15272 / CH1 / DL1 / V288).